A 380-amino-acid chain; its full sequence is Protein Wnt-5a (380 aa).

An N-terminal signal peptide occupies residues 1-37 (MKKPIGILSPGVALGTAGGAMSSKFFLMALATFFSFA). Positions 38-61 (QVVIEANSWWSLGMNNPVQMSEVH) are excised as a propeptide. Cysteine 104 and cysteine 115 are oxidised to a cystine. Asparagine 114 and asparagine 120 each carry an N-linked (GlcNAc...) asparagine glycan. Disulfide bonds link cysteine 154–cysteine 162, cysteine 164–cysteine 182, cysteine 238–cysteine 252, cysteine 240–cysteine 247, cysteine 309–cysteine 340, cysteine 325–cysteine 335, cysteine 339–cysteine 379, cysteine 355–cysteine 370, cysteine 357–cysteine 367, and cysteine 362–cysteine 363. A lipid anchor (O-palmitoleoyl serine; by PORCN) is attached at serine 244. N-linked (GlcNAc...) asparagine glycosylation is found at asparagine 312 and asparagine 326.

The protein belongs to the Wnt family. In terms of assembly, forms a soluble 1:1 complex with AFM; this prevents oligomerization and is required for prolonged biological activity. The complex with AFM may represent the physiological form in body fluids. Homooligomer; disulfide-linked, leading to inactivation (in vitro). Interacts with PORCN. Interacts with WLS. Interacts with glypican GCP3. Interacts with PKD1 (via extracellular domain). Interacts with TMEM67. In terms of processing, glycosylation is necessary for secretion but not for activity. Post-translationally, palmitoleoylation is required for efficient binding to frizzled receptors. Depalmitoleoylation leads to Wnt signaling pathway inhibition. Proteolytic processing by TIKI1 and TIKI2 promotes oxidation and formation of large disulfide-bond oligomers, leading to inactivation of WNT5A.

Its subcellular location is the secreted. It localises to the extracellular space. The protein localises to the extracellular matrix. Ligand for members of the frizzled family of seven transmembrane receptors. Can activate or inhibit canonical Wnt signaling, depending on receptor context. In the presence of FZD4, activates beta-catenin signaling. In the presence of ROR2, inhibits the canonical Wnt pathway by promoting beta-catenin degradation through a GSK3-independent pathway which involves down-regulation of beta-catenin-induced reporter gene expression. Suppression of the canonical pathway allows chondrogenesis to occur and inhibits tumor formation. Stimulates cell migration. Decreases proliferation, migration, invasiveness and clonogenicity of carcinoma cells and may act as a tumor suppressor. Mediates motility of melanoma cells. Required during embryogenesis for extension of the primary anterior-posterior axis and for outgrowth of limbs and the genital tubercle. Inhibits type II collagen expression in chondrocytes. In Rattus norvegicus (Rat), this protein is Protein Wnt-5a (Wnt5a).